The primary structure comprises 484 residues: Replication factor C large subunit (484 aa).

46 to 53 is a binding site for ATP; it reads GPPGSGKT. Composition is skewed to basic and acidic residues over residues 419 to 432, 442 to 451, and 459 to 478; these read VKTETPKKKEKTKE, RISEPPEPLK, and KSVEKADTKEKEKKDPKKQA. The tract at residues 419–484 is disordered; sequence VKTETPKKKE…KKQATLDSFF (66 aa).

The protein belongs to the activator 1 small subunits family. RfcL subfamily. Heteromultimer composed of small subunits (RfcS) and large subunits (RfcL).

Functionally, part of the RFC clamp loader complex which loads the PCNA sliding clamp onto DNA. This Methanococcus maripaludis (strain C5 / ATCC BAA-1333) protein is Replication factor C large subunit.